Here is a 28-residue protein sequence, read N- to C-terminus: Unknown protein from spot 154 of 2D-PAGE of etiolated coleoptile (28 aa).

The sequence is that of Unknown protein from spot 154 of 2D-PAGE of etiolated coleoptile from Zea mays (Maize).